Here is a 109-residue protein sequence, read N- to C-terminus: Cytochrome c oxidase subunit 6A1, mitochondrial (109 aa).

Residues 1-24 (MAAAAGSRVFGLLGRSRLQLSRCM) constitute a mitochondrion transit peptide. The Mitochondrial matrix portion of the chain corresponds to 25 to 34 (SSGAHGEEGS). Residues 35-59 (ARMWKALTYFVALPGVGVSMLNVFL) traverse the membrane as a helical segment. Topologically, residues 60–109 (KSHHGEEERPEFVAYPHLRIRSKPFPWGDGNHTLFHNPHVNPLPTGYEDE) are mitochondrial intermembrane.

Belongs to the cytochrome c oxidase subunit 6A family. Component of the cytochrome c oxidase (complex IV, CIV), a multisubunit enzyme composed of 14 subunits. The complex is composed of a catalytic core of 3 subunits MT-CO1, MT-CO2 and MT-CO3, encoded in the mitochondrial DNA, and 11 supernumerary subunits COX4I1 (or COX4I2), COX5A, COX5B, COX6A2 (or COX6A1), COX6B1 (or COX6B2), COX6C, COX7A1 (or COX7A2), COX7B, COX7C, COX8B and NDUFA4, which are encoded in the nuclear genome. The complex exists as a monomer or a dimer and forms supercomplexes (SCs) in the inner mitochondrial membrane with NADH-ubiquinone oxidoreductase (complex I, CI) and ubiquinol-cytochrome c oxidoreductase (cytochrome b-c1 complex, complex III, CIII), resulting in different assemblies (supercomplex SCI(1)III(2)IV(1) and megacomplex MCI(2)III(2)IV(2)).

It localises to the mitochondrion inner membrane. It functions in the pathway energy metabolism; oxidative phosphorylation. Its function is as follows. Component of the cytochrome c oxidase, the last enzyme in the mitochondrial electron transport chain which drives oxidative phosphorylation. The respiratory chain contains 3 multisubunit complexes succinate dehydrogenase (complex II, CII), ubiquinol-cytochrome c oxidoreductase (cytochrome b-c1 complex, complex III, CIII) and cytochrome c oxidase (complex IV, CIV), that cooperate to transfer electrons derived from NADH and succinate to molecular oxygen, creating an electrochemical gradient over the inner membrane that drives transmembrane transport and the ATP synthase. Cytochrome c oxidase is the component of the respiratory chain that catalyzes the reduction of oxygen to water. Electrons originating from reduced cytochrome c in the intermembrane space (IMS) are transferred via the dinuclear copper A center (CU(A)) of subunit 2 and heme A of subunit 1 to the active site in subunit 1, a binuclear center (BNC) formed by heme A3 and copper B (CU(B)). The BNC reduces molecular oxygen to 2 water molecules unsing 4 electrons from cytochrome c in the IMS and 4 protons from the mitochondrial matrix. In Bos taurus (Bovine), this protein is Cytochrome c oxidase subunit 6A1, mitochondrial (COX6A1).